A 505-amino-acid chain; its full sequence is E3 SUMO-protein ligase PIAS4-A (505 aa).

Positions 12–46 (VKSFRVSDLQTLLASMGRSKSGLKQDLVGRALRLV) constitute an SAP domain. Residues 20-24 (LQTLL) carry the LXXLL motif motif. Lys35 participates in a covalent cross-link: Glycyl lysine isopeptide (Lys-Gly) (interchain with G-Cter in SUMO); alternate. Lys35 is covalently cross-linked (Glycyl lysine isopeptide (Lys-Gly) (interchain with G-Cter in SUMO2); alternate). Residues Lys56 and Lys68 each participate in a glycyl lysine isopeptide (Lys-Gly) (interchain with G-Cter in SUMO2) cross-link. One can recognise a PINIT domain in the interval 104–264 (GIPKPAPPPA…SVAVYLVRVF (161 aa)). An SP-RING-type zinc finger spans residues 296–381 (PESEIATTGL…LKETPEDVEE (86 aa)). Zn(2+) is bound by residues Cys327, His329, Cys350, and Cys353. The tract at residues 374-505 (ETPEDVEEIE…DYDKDLVTAY (132 aa)) is required for nuclear localization. The span at 395–407 (DDKEKERERENSR) shows a compositional bias: basic and acidic residues. Residues 395 to 505 (DDKEKERERE…DYDKDLVTAY (111 aa)) form a disordered region. Gly residues predominate over residues 437-457 (SGSGGASAGTGSTSGGSGGGT). A compositionally biased stretch (acidic residues) spans 462 to 485 (TLDDSSEEEGGGGAEDSEETDDSQ). The segment covering 493 to 505 (GRYDYDKDLVTAY) has biased composition (basic and acidic residues).

It belongs to the PIAS family. Post-translationally, sumoylated. Lys-35 is the main site of sumoylation. As to expression, highly expressed in spleen, liver, and brain. Expressed at lower levels in heart, intestine, kidney, gill, skin, and muscle.

It is found in the nucleus. The enzyme catalyses S-ubiquitinyl-[E2 ubiquitin-conjugating enzyme]-L-cysteine + [acceptor protein]-L-lysine = [E2 ubiquitin-conjugating enzyme]-L-cysteine + N(6)-ubiquitinyl-[acceptor protein]-L-lysine.. It participates in protein modification; protein sumoylation. Its function is as follows. Functions as an E3-type small ubiquitin-like modifier (SUMO) ligase. May play a role as a transcriptional coregulator in various cellular pathways. Catalyzes conjugation of SUMO2 to KAT5 in response to DNA damage, facilitating repair of DNA double-strand breaks (DSBs) via homologous recombination (HR). Mediates sumoylation of PARP1 in response to PARP1 trapping to chromatin. Negatively regulates induction of interferon phi 1 (ifnphi1) mediated by mavs and ticam1/trif. Also inhibits ifnphi1-mediated activation of the interferon-stimulated genes (ISGs) pkz and cd40, and to a lesser extent rsad2 and isg15. May inhibit ticam1/trif-mediated activation of NF-kappa-B. The polypeptide is E3 SUMO-protein ligase PIAS4-A (Danio rerio (Zebrafish)).